The following is a 196-amino-acid chain: Glycerol-3-phosphate acyltransferase (196 aa).

4 consecutive transmembrane segments (helical) span residues 4-24 (LTLL…AVVI), 80-100 (PFFL…PLYF), 114-134 (AMFP…LLVF), and 155-175 (AYWI…LILW).

The protein belongs to the PlsY family. As to quaternary structure, probably interacts with PlsX.

It is found in the cell inner membrane. It carries out the reaction an acyl phosphate + sn-glycerol 3-phosphate = a 1-acyl-sn-glycero-3-phosphate + phosphate. The protein operates within lipid metabolism; phospholipid metabolism. In terms of biological role, catalyzes the transfer of an acyl group from acyl-phosphate (acyl-PO(4)) to glycerol-3-phosphate (G3P) to form lysophosphatidic acid (LPA). This enzyme utilizes acyl-phosphate as fatty acyl donor, but not acyl-CoA or acyl-ACP. The sequence is that of Glycerol-3-phosphate acyltransferase from Idiomarina loihiensis (strain ATCC BAA-735 / DSM 15497 / L2-TR).